A 271-amino-acid chain; its full sequence is PH domain-containing protein ECU06_0670 (271 aa).

A disordered region spans residues 26–145; it reads AKKTLDSSES…EKKNDAFIPP (120 aa). Composition is skewed to basic and acidic residues over residues 42 to 64, 92 to 120, and 128 to 140; these read EVGE…EPAM, QPEK…LLDK, and EENA…KKND. The region spanning 166–267 is the PH domain; that stretch reads NTVVEGWMWK…WVEKLNETIR (102 aa).

The sequence is that of PH domain-containing protein ECU06_0670 from Encephalitozoon cuniculi (strain GB-M1) (Microsporidian parasite).